Consider the following 321-residue polypeptide: Inner membrane protein YtfF (321 aa).

At 1-4 (MISG) the chain is on the cytoplasmic side. Residues 5–25 (VLYALLAGLMWGLIFVGPLIV) form a helical membrane-spanning segment. The 129-residue stretch at 13–141 (LMWGLIFVGP…IGIGLACVNI (129 aa)) folds into the EamA domain. The Periplasmic portion of the chain corresponds to 26–30 (PEYPA). Residues 31 to 51 (MLQSMGRYLALGLIALPIAWL) form a helical membrane-spanning segment. Over 52 to 65 (GRVRLRQLARRDWL) the chain is Cytoplasmic. A helical membrane pass occupies residues 66–86 (TALMLTMMGNLIYYFCLASAI). Residues 87–92 (QRTGAP) are Periplasmic-facing. Residues 93 to 113 (VSTMIIGTLPVVIPVFANLLY) form a helical membrane-spanning segment. Over 114 to 120 (SQRDGKL) the chain is Cytoplasmic. Residues 121–141 (AWGKLAPALICIGIGLACVNI) traverse the membrane as a helical segment. Over 142 to 154 (AELNHGLPDFDWA) the chain is Periplasmic. A helical membrane pass occupies residues 155–175 (RYTSGIVLALVSVVCWAWYAL). At 176-194 (RNARWLRENPDKHPMMWAT) the chain is on the cytoplasmic side. A helical transmembrane segment spans residues 195 to 215 (AQALVTLPVSLIGYLVACYWL). Topologically, residues 216–230 (NTQTPDFSLPFGPRP) are periplasmic. The chain crosses the membrane as a helical span at residues 231–251 (LVFISLMVAIAVLCSWVGALC). The Cytoplasmic segment spans residues 252 to 261 (WNVASQLLPT). Residues 262–282 (VILGPLIVFETLAGLLYTFLL) traverse the membrane as a helical segment. Residues 283–285 (RQQ) are Periplasmic-facing. A helical membrane pass occupies residues 286 to 306 (MPPLMTLSGIALLVIGVVIAV). The Cytoplasmic portion of the chain corresponds to 307-321 (RAKPEKPLTESVSES).

The protein localises to the cell inner membrane. In Escherichia coli (strain K12), this protein is Inner membrane protein YtfF (ytfF).